Reading from the N-terminus, the 393-residue chain is tRNA(Met) cytidine acetate ligase (393 aa).

The ATP site is built by Gly81, Asn142, and Arg167.

This sequence belongs to the TmcAL family.

It is found in the cytoplasm. It carries out the reaction cytidine(34) in elongator tRNA(Met) + acetate + ATP = N(4)-acetylcytidine(34) in elongator tRNA(Met) + AMP + diphosphate. Catalyzes the formation of N(4)-acetylcytidine (ac(4)C) at the wobble position of elongator tRNA(Met), using acetate and ATP as substrates. First activates an acetate ion to form acetyladenylate (Ac-AMP) and then transfers the acetyl group to tRNA to form ac(4)C34. The protein is tRNA(Met) cytidine acetate ligase of Bacillus cereus (strain ZK / E33L).